Consider the following 351-residue polypeptide: Anthranilate phosphoribosyltransferase (351 aa).

5-phospho-alpha-D-ribose 1-diphosphate is bound by residues Gly-90, 93–94 (GD), Thr-98, 100–103 (NIST), 118–126 (KHGNRSASG), and Ser-130. Gly-90 contacts anthranilate. Ser-102 provides a ligand contact to Mg(2+). Asn-121 lines the anthranilate pocket. Arg-176 is an anthranilate binding site. 2 residues coordinate Mg(2+): Asp-235 and Glu-236.

This sequence belongs to the anthranilate phosphoribosyltransferase family. Homodimer. Mg(2+) is required as a cofactor.

The catalysed reaction is N-(5-phospho-beta-D-ribosyl)anthranilate + diphosphate = 5-phospho-alpha-D-ribose 1-diphosphate + anthranilate. It participates in amino-acid biosynthesis; L-tryptophan biosynthesis; L-tryptophan from chorismate: step 2/5. Functionally, catalyzes the transfer of the phosphoribosyl group of 5-phosphorylribose-1-pyrophosphate (PRPP) to anthranilate to yield N-(5'-phosphoribosyl)-anthranilate (PRA). The polypeptide is Anthranilate phosphoribosyltransferase (Prochlorococcus marinus (strain MIT 9313)).